A 356-amino-acid polypeptide reads, in one-letter code: Guanine nucleotide-binding protein alpha-2 subunit (356 aa).

The tract at residues 1–25 (MGLCQSEEEKVGSQKSRAIDKEIKQ) is disordered. The N-myristoyl glycine moiety is linked to residue Gly-2. Residue Cys-4 is the site of S-palmitoyl cysteine attachment. Residues 7–25 (EEEKVGSQKSRAIDKEIKQ) are compositionally biased toward basic and acidic residues. The G-alpha domain occupies 14-338 (QKSRAIDKEI…TDTNQVQKIL (325 aa)). Residues 17 to 30 (RAIDKEIKQNQSND) are G1 motif. GTP is bound by residues Gln-25, Gln-27, Ser-28, Asn-29, Asp-30, Val-135, Glu-160, Ala-166, Val-188, Glu-254, Ser-255, Cys-257, and Phe-310. Asn-29 is a Mg(2+) binding site. Residues 158-166 (FFENLDRIA) form a G2 motif region. Ala-166 contacts Mg(2+). A G3 motif region spans residues 181-190 (RTKTTGIVEV). A G4 motif region spans residues 250–257 (MRLFESIC). Positions 308–313 (QKFEAL) are G5 motif.

It belongs to the G-alpha family. G(q) subfamily. G proteins are composed of 3 units; alpha, beta and gamma. The alpha chain contains the guanine nucleotide binding site. Mg(2+) serves as cofactor.

Guanine nucleotide-binding proteins (G proteins) are involved as modulators or transducers in various transmembrane signaling systems. Involved in behavioral responses to P.aeruginosa by controlling the expression of daf-7, a member of the TGF-beta family, in ASJ sensory neurons. This Caenorhabditis briggsae protein is Guanine nucleotide-binding protein alpha-2 subunit (gpa-2).